We begin with the raw amino-acid sequence, 252 residues long: Imidazole glycerol phosphate synthase subunit HisF (252 aa).

Active-site residues include aspartate 13 and aspartate 132.

This sequence belongs to the HisA/HisF family. Heterodimer of HisH and HisF.

The protein resides in the cytoplasm. The catalysed reaction is 5-[(5-phospho-1-deoxy-D-ribulos-1-ylimino)methylamino]-1-(5-phospho-beta-D-ribosyl)imidazole-4-carboxamide + L-glutamine = D-erythro-1-(imidazol-4-yl)glycerol 3-phosphate + 5-amino-1-(5-phospho-beta-D-ribosyl)imidazole-4-carboxamide + L-glutamate + H(+). It functions in the pathway amino-acid biosynthesis; L-histidine biosynthesis; L-histidine from 5-phospho-alpha-D-ribose 1-diphosphate: step 5/9. IGPS catalyzes the conversion of PRFAR and glutamine to IGP, AICAR and glutamate. The HisF subunit catalyzes the cyclization activity that produces IGP and AICAR from PRFAR using the ammonia provided by the HisH subunit. This Campylobacter fetus subsp. fetus (strain 82-40) protein is Imidazole glycerol phosphate synthase subunit HisF.